The sequence spans 519 residues: (3S,6E)-nerolidol synthase 1 (519 aa).

Residues Asp-273, Asp-277, Asp-417, Ser-421, and Glu-425 each coordinate Mg(2+). A DDXXD motif motif is present at residues 273 to 277 (DDIFD).

Belongs to the terpene synthase family. Tpsg subfamily. Mg(2+) is required as a cofactor. The cofactor is Mn(2+). In terms of tissue distribution, expressed in receptacle tissue. Not detected in leaves or green fruit.

The protein resides in the cytoplasm. It localises to the cytosol. The enzyme catalyses (2E,6E)-farnesyl diphosphate + H2O = (3S,6E)-nerolidol + diphosphate. It participates in secondary metabolite biosynthesis; terpenoid biosynthesis. Involved in monoterpene (C10) and sesquiterpene (C15) biosynthesis. Converts geranyl diphosphate (GPP) into S-linalool and farnesyl diphosphate (FPP) into (3S)-E-nerolidol. Exclusively present and highly expressed in the fruit of cultivated (octaploid) varieties. The protein is (3S,6E)-nerolidol synthase 1 of Fragaria ananassa (Strawberry).